The primary structure comprises 99 residues: Plastocyanin (99 aa).

Residues 1 to 99 form the Plastocyanin-like domain; it reads VEVLMGGSGG…IGMSGIVTVN (99 aa). Residues His-37, Cys-84, His-87, and Met-92 each contribute to the Cu cation site.

The protein belongs to the plastocyanin family. Cu(2+) is required as a cofactor.

Its subcellular location is the plastid. It localises to the chloroplast thylakoid membrane. Participates in electron transfer between P700 and the cytochrome b6-f complex in photosystem I. This is Plastocyanin (PETE) from Ginkgo biloba (Ginkgo).